The sequence spans 430 residues: uncharacterized protein (430 aa).

12 helical membrane passes run 36-56 (LFVVSISQIFGGAGLAAGVTV), 69-89 (AFAGLPSALFTLGSAGSALIV), 100-122 (TGLSAGFMIGGLGAIGVIMAAII), 126-148 (FLLFISLLIYGAGTATNLQARYA), 160-180 (TAVSITMVFTTFGAVAGPSLV), 197-217 (GPFILAAAAYMLAGVVLFIML), 253-273 (IIVGATVMVLTQIVMVAIMTM), 285-305 (LGAVGLVIGFHIGAMYLPSLV), 317-337 (AMAISSGTTLLLAGVIAAFAP), 340-360 (SMILLVIALSLLGLGWNFGLI), 384-404 (VLIALSGAAGGALSGMIVAGS), and 406-426 (YLALSLIGGILSLLLIPVVVW).

The protein belongs to the major facilitator superfamily.

It localises to the cell membrane. This is an uncharacterized protein from Bacillus subtilis (strain 168).